A 141-amino-acid chain; its full sequence is MSIVIGADAAGLRLKEVVKDFLEKENFHLVDVTAEGQDFVDVTLAVAAEVNKEEQNLGIVIDAYGAGPFIVATKIKGMVAAEVSDERSAYMTRSHNNSRMITMGAQLVGDELAKNIAKGFVNGKYDGGRHQIRVDMLNKMG.

The protein belongs to the LacAB/RpiB family. Heteromultimeric protein consisting of LacA and LacB.

The catalysed reaction is aldehydo-D-galactose 6-phosphate = keto-D-tagatose 6-phosphate. Its pathway is carbohydrate metabolism; D-galactose 6-phosphate degradation; D-tagatose 6-phosphate from D-galactose 6-phosphate: step 1/1. The polypeptide is Galactose-6-phosphate isomerase subunit LacA (Streptococcus pneumoniae (strain Taiwan19F-14)).